Here is a 306-residue protein sequence, read N- to C-terminus: NAD kinase 1 (306 aa).

Catalysis depends on D67, which acts as the Proton acceptor. NAD(+) contacts are provided by residues D67–G68, N149–E150, and D181.

It belongs to the NAD kinase family. A divalent metal cation is required as a cofactor.

The protein localises to the cytoplasm. It carries out the reaction NAD(+) + ATP = ADP + NADP(+) + H(+). In terms of biological role, involved in the regulation of the intracellular balance of NAD and NADP, and is a key enzyme in the biosynthesis of NADP. Catalyzes specifically the phosphorylation on 2'-hydroxyl of the adenosine moiety of NAD to yield NADP. This chain is NAD kinase 1, found in Thermosynechococcus vestitus (strain NIES-2133 / IAM M-273 / BP-1).